A 503-amino-acid chain; its full sequence is Maturase K (503 aa).

Belongs to the intron maturase 2 family. MatK subfamily.

The protein resides in the plastid. It is found in the chloroplast. Functionally, usually encoded in the trnK tRNA gene intron. Probably assists in splicing its own and other chloroplast group II introns. The protein is Maturase K of Vicia sativa (Spring vetch).